A 1386-amino-acid chain; its full sequence is Lysophospholipase NTE1 (1386 aa).

At 1–19 the chain is on the cytoplasmic side; sequence MGPEFEDSIPLVHSDNRTT. A helical membrane pass occupies residues 20 to 40; the sequence is TIYSVYIIISDIFSFVQWLLF. Residues 41–65 are Lumenal-facing; the sequence is KVLNLIIIDSPAFVLRLLSKNFEIN. Residues 66 to 86 traverse the membrane as a helical segment; sequence LHLSSILATLIGVSVVTYLVI. The Cytoplasmic portion of the chain corresponds to 87 to 1386; sequence RYKFLTGYSH…KKILYRRNSI (1300 aa). The segment at 394–416 is disordered; that stretch reads EAEAENLPKKLKHHHRNQLQRTT. Residues 402 to 411 are compositionally biased toward basic residues; sequence KKLKHHHRNQ. A nucleoside 3',5'-cyclic phosphate is bound by residues 577–701 and 697–821; these read KRLL…LKNL and KLKN…VASK. In terms of domain architecture, PNPLA spans 1081–1245; sequence LVLGGGGSRG…LDNLPVNEMK (165 aa). A GXGXXG motif is present at residues 1085–1090; that stretch reads GGGSRG. The GXSXG signature appears at 1112 to 1116; that stretch reads GTSIG. S1114 functions as the Nucleophile in the catalytic mechanism. Catalysis depends on D1232, which acts as the Proton acceptor. The DGA/G motif lies at 1232-1234; it reads DGG.

This sequence belongs to the NTE family.

The protein resides in the endoplasmic reticulum membrane. The enzyme catalyses a 1-acyl-sn-glycero-3-phosphocholine + H2O = sn-glycerol 3-phosphocholine + a fatty acid + H(+). Inhibited by organophosphorus esters. Its function is as follows. Intracellular phospholipase B that catalyzes the double deacylation of phosphatidylcholine (PC) to glycerophosphocholine (GroPCho). Plays an important role in membrane lipid homeostasis. Responsible for the rapid PC turnover in response to inositol, elevated temperatures, or when choline is present in the growth medium. The sequence is that of Lysophospholipase NTE1 (NTE1) from Candida albicans (strain SC5314 / ATCC MYA-2876) (Yeast).